The primary structure comprises 557 residues: MPERDSEPFSNPLAPDGHDVDDPHSFHQSKLTNEDFRKLLMTPRAAPTSAPPSKSRHHEMPREYNEDEDPAARRRKKKSYYAKLRQQEIERERELAEKYRDRAKERRDGVNKDYEETELISTTANYRAVGPTAEADKSAAEKRRQLIQESKFLGGDMEHTHLVKGLDFALLQKVRAEIASKEKEEEELMEKPQKETKKDEDPENKIEFKTRLGRNVYRMLFKSKAYERNELFLPGRMAYVVDLDDEYADTDIPTTLIRSKADCPTMEAQTTLTTNDIVISKLTQILSYLRQGTRNKKLKKKDKGKLEEKKPPEADMNIFEDIGDYVPSTTKTPRDKERERYRERERDRERDRDRDRERERERDRERERERDREREEEKKRHSYFEKPKVDDEPIDVDKGPGSAKELIKSINEKFAGSAGWEGTESLKKPEDKKQLGDFFGMSNSYAECYPATMDDMAVDSDEEVDYSKMDQGNKKGPLGRWDFDTQEEYSEYMNNKEALPKAAFQYGIKMSEGRKTRRFKETNDKAELDRQWKKISAIIEKRKKMEADGVEVKRPKY.

Residues 1 to 84 (MPERDSEPFS…RKKKSYYAKL (84 aa)) form a disordered region. The segment covering 16–25 (DGHDVDDPHS) has biased composition (basic and acidic residues). Low complexity predominate over residues 42-53 (TPRAAPTSAPPS). An N6-acetyllysine mark is found at Lys98 and Lys137. A Glycyl lysine isopeptide (Lys-Gly) (interchain with G-Cter in SUMO2) cross-link involves residue Lys151. The interval 181–205 (KEKEEEELMEKPQKETKKDEDPENK) is disordered. Ser287 carries the post-translational modification Phosphoserine. The segment covering 294-303 (RNKKLKKKDK) has biased composition (basic residues). Residues 294–402 (RNKKLKKKDK…PIDVDKGPGS (109 aa)) are disordered. The segment covering 304-313 (GKLEEKKPPE) has biased composition (basic and acidic residues). Glycyl lysine isopeptide (Lys-Gly) (interchain with G-Cter in SUMO2) cross-links involve residues Lys310 and Lys331. Residues 332 to 398 (TPRDKERERY…VDDEPIDVDK (67 aa)) show a composition bias toward basic and acidic residues. Tandem repeats lie at residues 342 to 343 (RE), 344 to 345 (RE), 346 to 347 (RD), 348 to 349 (RE), 350 to 351 (RD), 352 to 353 (RD), 354 to 355 (RD), 356 to 357 (RE), 358 to 359 (RE), 360 to 361 (RE), 362 to 363 (RD), 364 to 365 (RE), 366 to 367 (RE), 368 to 369 (RE), 370 to 371 (RD), 372 to 373 (RE), and 374 to 375 (RE). The tract at residues 342–375 (RERERDRERDRDRDRERERERDRERERERDRERE) is 17 X 2 AA tandem repeats of R-[ED]. Residues Lys386, Lys388, Lys404, and Lys408 each participate in a glycyl lysine isopeptide (Lys-Gly) (interchain with G-Cter in SUMO2) cross-link. A phosphoserine mark is found at Ser417 and Ser460. At Thr485 the chain carries Phosphothreonine. Glycyl lysine isopeptide (Lys-Gly) (interchain with G-Cter in SUMO2) cross-links involve residues Lys496, Lys501, and Lys509. A Phosphoserine modification is found at Ser536. Residues Lys541, Lys543, Lys544, and Lys553 each participate in a glycyl lysine isopeptide (Lys-Gly) (interchain with G-Cter in SUMO2) cross-link.

This sequence belongs to the RED family. As to quaternary structure, component of the spliceosome B complex. Interacts with SMU1. Interacts with MAD1L1. May interact with DHX15.

It localises to the nucleus. The protein localises to the nucleoplasm. It is found in the chromosome. The protein resides in the cytoplasm. Its subcellular location is the cytoskeleton. It localises to the spindle pole. Involved in pre-mRNA splicing as a component of the spliceosome. Auxiliary spliceosomal protein that regulates selection of alternative splice sites in a small set of target pre-mRNA species. Required for normal mitotic cell cycle progression. Recruits MAD1L1 and MAD2L1 to kinetochores, and is required to trigger the spindle assembly checkpoint. Required for normal accumulation of SMU1. The protein is Protein Red (IK) of Pongo abelii (Sumatran orangutan).